The primary structure comprises 688 residues: Zinc finger and BTB domain-containing protein 48 (688 aa).

The BTB domain occupies 26–89 (CDATLDVGGL…FYTGHLALTS (64 aa)). The segment at 119–140 (SVGQAAGGQSGLGPPASQNVNS) is disordered. Lys-143 is covalently cross-linked (Glycyl lysine isopeptide (Lys-Gly) (interchain with G-Cter in SUMO2)). Residues 161–192 (PRDQEPRGSHSPQRPQLHSPAQSEGPSSLCGK) are disordered. 3 positions are modified to phosphoserine: Ser-169, Ser-171, and Ser-179. Residues 170–186 (HSPQRPQLHSPAQSEGP) are compositionally biased toward polar residues. Residue Lys-263 forms a Glycyl lysine isopeptide (Lys-Gly) (interchain with G-Cter in SUMO2) linkage. The segment at 291-313 (VECPTCHKKFLSKYYLKVHNRKH) adopts a C2H2-type 1 zinc-finger fold. Zn(2+) contacts are provided by Cys-293, Cys-296, His-309, His-313, Cys-321, Cys-324, His-337, Cys-342, Cys-352, Cys-355, His-368, His-372, Cys-380, Cys-383, His-396, and His-401. The segment at 319-344 (FECPKCGKCYFRKENLLEHEARNCMN) adopts a CCHC-type zinc-finger fold. 9 consecutive C2H2-type zinc fingers follow at residues 350 to 372 (FTCSVCQETFRRRMELRVHMVSH), 378 to 401 (YKCSSCSQQFMQKKDLQSHMIKLH), 407 to 430 (HACPTCAKCFLSRTELQLHEAFKH), 436 to 459 (FVCEECGHRASSRNGLQMHIKAKH), 465 to 487 (HVCEFCSHAFTQKANLNMHLRTH), 493 to 515 (FQCHLCGKTFRTQASLDKHNRTH), 521 to 544 (FSCEFCEQRFTEKGPLLRHVASRH), 550 to 572 (HFCQICGKTFKAVEQLRVHVRRH), and 578 to 600 (FECTECGYKFTRQAHLRRHMEIH). Residues Cys-552, Cys-555, His-568, Cys-580, Cys-583, His-596, and His-600 each coordinate Zn(2+).

It belongs to the krueppel C2H2-type zinc-finger protein family. Interacts with EP300. In terms of tissue distribution, detected in adrenal gland and neuroblastoma.

It is found in the nucleus. Its subcellular location is the chromosome. The protein resides in the telomere. Functionally, plays a critical role in transcriptional regulation and chromatin remodeling. Acts as a regulator of telomere length. Directly binds the telomeric double-stranded 5'-TTAGGG-3' repeat. Preferentially binds to telomeres that have a low concentration of shelterin complex and acts as a regulator of telomere length by initiating telomere trimming, a process that prevents the accumulation of aberrantly long telomeres. Also acts as a transcription regulator that binds to promoter regions. Regulates expression of a small subset of genes, including MTFP1. Acts as a negative regulator of cell proliferation by specifically activating expression of ARF, a tumor suppressor isoform of CDKN2A. Acts as a transcription regulator of CIITA, the major factor regulating MHC class II gene expression. In addition, regulates cellular m6A/m6Am methylation on RNA by facilitating the recruitment of the RNA demethylase, FTO, to target mRNAs. This Homo sapiens (Human) protein is Zinc finger and BTB domain-containing protein 48.